A 377-amino-acid polypeptide reads, in one-letter code: Gap junction gamma-1 protein (377 aa).

Topologically, residues 1 to 18 (MSWSFLTRLLEEINNHST) are cytoplasmic. Residues 19–39 (FVGKVWLTVLIIFRIVLTAVG) form a helical membrane-spanning segment. Residues 40 to 75 (GESIYYDEQSKFTCNTQQPGCENVCYDAFAPLSHVR) are Extracellular-facing. The helical transmembrane segment at 76–96 (FWVFQIILITTPSIMYLGFAM) threads the bilayer. Residues 97–174 (HRIARQPEMQ…RRIKQDGLMK (78 aa)) lie on the Cytoplasmic side of the membrane. A disordered region spans residues 129–163 (DYEEAEDNQEEDPMICEEEEPEKDSEKGDKKKHDG). Residues 131 to 151 (EEAEDNQEEDPMICEEEEPEK) are compositionally biased toward acidic residues. The chain crosses the membrane as a helical span at residues 175–197 (VYVLQLLFRSVFEVGFLMGQYIL). Residues 198–228 (YGFEVIPFFVCSRKPCPHTVDCFVSRPTEKT) lie on the Extracellular side of the membrane. A helical membrane pass occupies residues 229 to 249 (IFLLIMYAVSALCLFLNLCEL). The Cytoplasmic segment spans residues 250–377 (FHLGIGGIRD…GVGNREKSGL (128 aa)). Disordered stretches follow at residues 265–294 (KKEL…LPNG) and 334–377 (LNPT…KSGL). Residues 337-362 (TGDNTHASRSSSPESNSIAAEQNRLN) show a composition bias toward polar residues.

It belongs to the connexin family. Gamma-type subfamily. In terms of assembly, a connexon is composed of a hexamer of connexins.

The protein localises to the cell membrane. The protein resides in the cell junction. Its subcellular location is the gap junction. Its function is as follows. One gap junction consists of a cluster of closely packed pairs of transmembrane channels, the connexons, through which materials of low MW diffuse from one cell to a neighboring cell. This is Gap junction gamma-1 protein (gjc1) from Xenopus tropicalis (Western clawed frog).